The sequence spans 510 residues: NAD(P)H-quinone oxidoreductase subunit 2 A, chloroplastic (510 aa).

A run of 13 helical transmembrane segments spans residues 24-44, 57-77, 99-119, 124-144, 149-169, 183-203, 227-247, 295-315, 323-343, 354-374, 395-415, 418-438, and 484-504; these read LLLFDGSLIFPECILIFGLIL, IPWLYFISSTSLVLSITALLF, IFQFLILLCSTLCIPLSVEYI, MAITEFLLFVLTATLGGMFLC, LITIFVAPECFSLCSYLLSGY, YLLMGGASSSILVHGFSWLYG, PGISIALIFITVGIGFKLSPA, WHLLLEILAILSMILGNLIAI, MLAYSSIGQIGYVIIGIIVGD, YMLFYISMNLGTFACIVLFGL, ALSLALCLLSLGGLPPLAGFF, LYLFWCGWQAGLYFLVLIGLL, and MIVCVIASTIPGISMNPIIAI.

This sequence belongs to the complex I subunit 2 family. As to quaternary structure, NDH is composed of at least 16 different subunits, 5 of which are encoded in the nucleus.

It is found in the plastid. Its subcellular location is the chloroplast thylakoid membrane. The catalysed reaction is a plastoquinone + NADH + (n+1) H(+)(in) = a plastoquinol + NAD(+) + n H(+)(out). It carries out the reaction a plastoquinone + NADPH + (n+1) H(+)(in) = a plastoquinol + NADP(+) + n H(+)(out). Functionally, NDH shuttles electrons from NAD(P)H:plastoquinone, via FMN and iron-sulfur (Fe-S) centers, to quinones in the photosynthetic chain and possibly in a chloroplast respiratory chain. The immediate electron acceptor for the enzyme in this species is believed to be plastoquinone. Couples the redox reaction to proton translocation, and thus conserves the redox energy in a proton gradient. The sequence is that of NAD(P)H-quinone oxidoreductase subunit 2 A, chloroplastic from Solanum tuberosum (Potato).